Consider the following 397-residue polypeptide: Phosphoglycerate kinase (397 aa).

Substrate-binding positions include 21 to 23, Arg36, 59 to 62, Arg119, and Arg152; these read DVN and HFGR. ATP is bound by residues Lys202, Glu324, and 354–357; that span reads GGDT.

Belongs to the phosphoglycerate kinase family. In terms of assembly, monomer.

The protein localises to the cytoplasm. It catalyses the reaction (2R)-3-phosphoglycerate + ATP = (2R)-3-phospho-glyceroyl phosphate + ADP. Its pathway is carbohydrate degradation; glycolysis; pyruvate from D-glyceraldehyde 3-phosphate: step 2/5. The polypeptide is Phosphoglycerate kinase (Cereibacter sphaeroides (strain KD131 / KCTC 12085) (Rhodobacter sphaeroides)).